The chain runs to 132 residues: Small ribosomal subunit protein uS11 (132 aa).

Belongs to the universal ribosomal protein uS11 family. As to quaternary structure, part of the 30S ribosomal subunit. Interacts with proteins S7 and S18. Binds to IF-3.

Located on the platform of the 30S subunit, it bridges several disparate RNA helices of the 16S rRNA. Forms part of the Shine-Dalgarno cleft in the 70S ribosome. This is Small ribosomal subunit protein uS11 from Lachnoclostridium phytofermentans (strain ATCC 700394 / DSM 18823 / ISDg) (Clostridium phytofermentans).